A 407-amino-acid polypeptide reads, in one-letter code: uncharacterized protein (407 aa).

Disordered regions lie at residues 73 to 93 (SPHS…VHGG) and 116 to 202 (SGSI…IKPS). Repeat copies occupy residues 112–116 (GSIRS), 117–121 (GSIRS), 122–126 (GSIRN), 127–131 (GSIRS), and 132–136 (GSVRD). The segment at 112–136 (GSIRSGSIRSGSIRNGSIRSGSVRD) is 5 X 5 AA tandem repeats of G-[S]-[IV]-R-[DNS]. Positions 116–132 (SGSIRSGSIRNGSIRSG) are enriched in low complexity. Residues 187-202 (NHYAESEYSEKSIKPS) are compositionally biased toward basic and acidic residues.

Belongs to the asfivirus B407L family.

This is an uncharacterized protein from Ornithodoros (relapsing fever ticks).